Here is a 240-residue protein sequence, read N- to C-terminus: Small ribosomal subunit protein uS3 (240 aa).

A KH type-2 domain is found at Ile-39 to Arg-107. Residues Pro-212 to Leu-222 are compositionally biased toward basic and acidic residues. The disordered stretch occupies residues Pro-212–Arg-240. Residues Glu-224 to Gly-234 are compositionally biased toward gly residues.

This sequence belongs to the universal ribosomal protein uS3 family. As to quaternary structure, part of the 30S ribosomal subunit. Forms a tight complex with proteins S10 and S14.

In terms of biological role, binds the lower part of the 30S subunit head. Binds mRNA in the 70S ribosome, positioning it for translation. The chain is Small ribosomal subunit protein uS3 from Dinoroseobacter shibae (strain DSM 16493 / NCIMB 14021 / DFL 12).